The primary structure comprises 760 residues: ATP-dependent DNA helicase Hel308 (760 aa).

ATP contacts are provided by residues Gln28 and 46–53 (IPTASGKT). Residues 33–199 (EMGLLEKKNL…WLGAALVLSE (167 aa)) enclose the Helicase ATP-binding domain. A DEAH box motif is present at residues 144 to 147 (DEIH). One can recognise a Helicase C-terminal domain in the interval 232–426 (AVNLVLDTIK…SKLGTENALR (195 aa)).

This sequence belongs to the helicase family. Hel308 subfamily. As to quaternary structure, monomer.

The catalysed reaction is Couples ATP hydrolysis with the unwinding of duplex DNA by translocating in the 3'-5' direction.. The enzyme catalyses ATP + H2O = ADP + phosphate + H(+). Its function is as follows. DNA-dependent ATPase and 3'-5' DNA helicase that may be involved in repair of stalled replication forks. The chain is ATP-dependent DNA helicase Hel308 from Methanococcoides burtonii (strain DSM 6242 / NBRC 107633 / OCM 468 / ACE-M).